We begin with the raw amino-acid sequence, 212 residues long: Ribosomal RNA small subunit methyltransferase G (212 aa).

S-adenosyl-L-methionine contacts are provided by residues Gly80, Leu85, 131-132 (AE), and Arg146.

The protein belongs to the methyltransferase superfamily. RNA methyltransferase RsmG family.

The protein localises to the cytoplasm. The catalysed reaction is guanosine(527) in 16S rRNA + S-adenosyl-L-methionine = N(7)-methylguanosine(527) in 16S rRNA + S-adenosyl-L-homocysteine. Functionally, specifically methylates the N7 position of guanine in position 527 of 16S rRNA. The protein is Ribosomal RNA small subunit methyltransferase G of Xanthomonas euvesicatoria pv. vesicatoria (strain 85-10) (Xanthomonas campestris pv. vesicatoria).